The primary structure comprises 210 residues: GGLLKKARELAILCDAQLGVIIFSSSGKMFEFSSPPISMREIIDRYQKLSGNCAPVYDNQQVYCEITRMKNEIDKLQATMRHFAGEDLTSLTMNEMLQLEQQLEISVNKVRSRKEQLLQQQLDNLRRKENMLEEQNRELYRVIQDHHAASMEQKMVDPSMLDHFGVFYQDDHQAARSSMLQLSPQLHPFRLQPAQPNLQDANLLPHDLQL.

The region spanning glycine 1–proline 36 is the MADS-box domain. The region spanning asparagine 59–alanine 149 is the K-box domain.

Expressed exclusively in the carpel.

It localises to the nucleus. Its function is as follows. Probable transcription factor. The sequence is that of MADS-box protein AeAP3-2 (AP3-2) from Asarum europaeum (Asarabacca).